Consider the following 701-residue polypeptide: Epithelial splicing regulatory protein 2 (701 aa).

RRM domains are found at residues 226–303, 327–407, and 448–523; these read TVIR…KATG, VIIR…RSTA, and CVRL…VEVF.

This sequence belongs to the ESRP family.

The protein resides in the nucleus. MRNA splicing factor that regulates the formation of epithelial cell-specific isoforms. Specifically regulates the expression of FGFR2-IIIb, an epithelial cell-specific isoform of FGFR2. Acts by directly binding specific sequences in mRNAs. Binds the GU-rich sequence motifs in the ISE/ISS-3, a cis-element regulatory region present in the mRNA of FGFR2. The polypeptide is Epithelial splicing regulatory protein 2 (ESRP2) (Gallus gallus (Chicken)).